We begin with the raw amino-acid sequence, 571 residues long: Proline--tRNA ligase (571 aa).

The protein belongs to the class-II aminoacyl-tRNA synthetase family. ProS type 1 subfamily. As to quaternary structure, homodimer.

It is found in the cytoplasm. It carries out the reaction tRNA(Pro) + L-proline + ATP = L-prolyl-tRNA(Pro) + AMP + diphosphate. Its function is as follows. Catalyzes the attachment of proline to tRNA(Pro) in a two-step reaction: proline is first activated by ATP to form Pro-AMP and then transferred to the acceptor end of tRNA(Pro). As ProRS can inadvertently accommodate and process non-cognate amino acids such as alanine and cysteine, to avoid such errors it has two additional distinct editing activities against alanine. One activity is designated as 'pretransfer' editing and involves the tRNA(Pro)-independent hydrolysis of activated Ala-AMP. The other activity is designated 'posttransfer' editing and involves deacylation of mischarged Ala-tRNA(Pro). The misacylated Cys-tRNA(Pro) is not edited by ProRS. The sequence is that of Proline--tRNA ligase from Pediococcus pentosaceus (strain ATCC 25745 / CCUG 21536 / LMG 10740 / 183-1w).